The following is a 206-amino-acid chain: Regulator of rDNA transcription 14 (206 aa).

The segment at 178–206 (FVKDHRYPGLTPGLAPVGLSDEEDSSEED) is disordered. 3 positions are modified to phosphoserine: S197, S202, and S203. Residues 197 to 206 (SDEEDSSEED) show a composition bias toward acidic residues.

Belongs to the RRT14 family.

The protein localises to the nucleus. The protein resides in the nucleolus. Functionally, involved in ribosome biogenesis, probably through modulation of rDNA transcription. The polypeptide is Regulator of rDNA transcription 14 (RRT14) (Saccharomyces cerevisiae (strain AWRI1631) (Baker's yeast)).